Reading from the N-terminus, the 498-residue chain is MGGGVSYVGWLEKSETEKLLEYIEEISCASDQVEKYKLDIAQLEEDLKEKDREILCLKQSLEEKVSFSKQIEDLTVKCQLLEAERDDLVSKDRERAESLSAEMQVLTEKLLLERQEYEKLQQNELQSQSLLQQEKELSAHLQQQLCSFQEEMTSERNVFKEQLKLALDELDAVQQKEEQSEKLVKQLEEETKSTAEQLRRLDDLLREKEIELEKRTAAHAQATVIAQEKYSDTAQTLRDVTAQLESYKSSTLKEIEDLKLENLTLQEKVAMAEKRVEDVQQQILTAESTNQEYAKVVQDLQNSSTLKEAEIKEITSSYLEKITDLQNQLRQQNEDFRKQLEEEGAKMTEKETAVTELTMEINKWRLLYEELYDKTKPFQQQLDAFEAEKQALLNEHGATQEQLSKIRDSYAQLLGHQNLKQKIKHVVKLKDENSQLKSEVSKLRSQLAKRKQNELRLQGELDKALGIRHFDPPKAFCHESKENVTLKTPLKEGNPNCC.

The tract at residues 150 to 331 (EEMTSERNVF…ITDLQNQLRQ (182 aa)) is required for interaction with FAM83D. 2 N-linked (GlcNAc...) asparagine glycosylation sites follow: Asn262 and Asn302. Hyaluronic acid-binding stretches follow at residues 420-430 (KQKIKHVVKLK) and 442-451 (KLRSQLAKRK). An N-linked (GlcNAc...) asparagine glycan is attached at Asn483. Thr488 carries the phosphothreonine modification.

In terms of assembly, interacts with ANKRD26. Interacts with DYNLL1. Interacts with FAM83D/CHICA.

The protein localises to the cell surface. Its subcellular location is the cytoplasm. It is found in the cytoskeleton. It localises to the spindle. Functionally, receptor for hyaluronic acid (HA). Involved in cell motility. When hyaluronan binds to HMMR, the phosphorylation of a number of proteins, including the PTK2/FAK1 occurs. May also be involved in cellular transformation and metastasis formation, and in regulating extracellular-regulated kinase (ERK) activity. May act as a regulator of adipogenisis. This Rattus norvegicus (Rat) protein is Hyaluronan-mediated motility receptor (Hmmr).